The following is a 347-amino-acid chain: UDP-3-O-acylglucosamine N-acyltransferase (347 aa).

The active-site Proton acceptor is H241.

Belongs to the transferase hexapeptide repeat family. LpxD subfamily. In terms of assembly, homotrimer.

The catalysed reaction is a UDP-3-O-[(3R)-3-hydroxyacyl]-alpha-D-glucosamine + a (3R)-hydroxyacyl-[ACP] = a UDP-2-N,3-O-bis[(3R)-3-hydroxyacyl]-alpha-D-glucosamine + holo-[ACP] + H(+). It functions in the pathway bacterial outer membrane biogenesis; LPS lipid A biosynthesis. Its function is as follows. Catalyzes the N-acylation of UDP-3-O-acylglucosamine using 3-hydroxyacyl-ACP as the acyl donor. Is involved in the biosynthesis of lipid A, a phosphorylated glycolipid that anchors the lipopolysaccharide to the outer membrane of the cell. The protein is UDP-3-O-acylglucosamine N-acyltransferase of Nitrosococcus oceani (strain ATCC 19707 / BCRC 17464 / JCM 30415 / NCIMB 11848 / C-107).